We begin with the raw amino-acid sequence, 376 residues long: Lipoyl synthase, mitochondrial (376 aa).

Residues Cys-103, Cys-108, Cys-114, Cys-134, Cys-138, Cys-141, and Ser-349 each contribute to the [4Fe-4S] cluster site. A Radical SAM core domain is found at 119 to 338 (EHGTQTATIM…EDRGNQLGFL (220 aa)).

It belongs to the radical SAM superfamily. Lipoyl synthase family. It depends on [4Fe-4S] cluster as a cofactor.

It is found in the mitochondrion. The catalysed reaction is [[Fe-S] cluster scaffold protein carrying a second [4Fe-4S](2+) cluster] + N(6)-octanoyl-L-lysyl-[protein] + 2 oxidized [2Fe-2S]-[ferredoxin] + 2 S-adenosyl-L-methionine + 4 H(+) = [[Fe-S] cluster scaffold protein] + N(6)-[(R)-dihydrolipoyl]-L-lysyl-[protein] + 4 Fe(3+) + 2 hydrogen sulfide + 2 5'-deoxyadenosine + 2 L-methionine + 2 reduced [2Fe-2S]-[ferredoxin]. Its pathway is protein modification; protein lipoylation via endogenous pathway; protein N(6)-(lipoyl)lysine from octanoyl-[acyl-carrier-protein]: step 2/2. Functionally, catalyzes the radical-mediated insertion of two sulfur atoms into the C-6 and C-8 positions of the octanoyl moiety bound to the lipoyl domains of lipoate-dependent enzymes, thereby converting the octanoylated domains into lipoylated derivatives. This is Lipoyl synthase, mitochondrial from Drosophila ananassae (Fruit fly).